Here is a 169-residue protein sequence, read N- to C-terminus: Shikimate kinase (169 aa).

ATP is bound at residue 13 to 18 (GAGKST). S17 contacts Mg(2+). Positions 35, 59, and 80 each coordinate substrate. Residue R117 coordinates ATP. R136 serves as a coordination point for substrate. An ATP-binding site is contributed by R153.

The protein belongs to the shikimate kinase family. Monomer. The cofactor is Mg(2+).

The protein localises to the cytoplasm. It carries out the reaction shikimate + ATP = 3-phosphoshikimate + ADP + H(+). Its pathway is metabolic intermediate biosynthesis; chorismate biosynthesis; chorismate from D-erythrose 4-phosphate and phosphoenolpyruvate: step 5/7. In terms of biological role, catalyzes the specific phosphorylation of the 3-hydroxyl group of shikimic acid using ATP as a cosubstrate. The protein is Shikimate kinase of Corynebacterium glutamicum (strain ATCC 13032 / DSM 20300 / JCM 1318 / BCRC 11384 / CCUG 27702 / LMG 3730 / NBRC 12168 / NCIMB 10025 / NRRL B-2784 / 534).